The chain runs to 286 residues: Nucleotide-binding protein HAPS_0087 (286 aa).

8–15 serves as a coordination point for ATP; the sequence is GRSGSGKS. 56–59 is a binding site for GTP; sequence DVRN.

Belongs to the RapZ-like family.

Its function is as follows. Displays ATPase and GTPase activities. This Glaesserella parasuis serovar 5 (strain SH0165) (Haemophilus parasuis) protein is Nucleotide-binding protein HAPS_0087.